The chain runs to 164 residues: Phosphopantetheine adenylyltransferase (164 aa).

Thr-10 is a substrate binding site. Residues 10–11 and His-18 each bind ATP; that span reads TF. Lys-42, Thr-79, and Arg-93 together coordinate substrate. ATP-binding positions include 94–96, Glu-104, and 129–135; these read GLR and NQIISSR.

This sequence belongs to the bacterial CoaD family. As to quaternary structure, homohexamer. Mg(2+) serves as cofactor.

The protein localises to the cytoplasm. The catalysed reaction is (R)-4'-phosphopantetheine + ATP + H(+) = 3'-dephospho-CoA + diphosphate. Its pathway is cofactor biosynthesis; coenzyme A biosynthesis; CoA from (R)-pantothenate: step 4/5. Reversibly transfers an adenylyl group from ATP to 4'-phosphopantetheine, yielding dephospho-CoA (dPCoA) and pyrophosphate. The protein is Phosphopantetheine adenylyltransferase of Pelagibacter ubique (strain HTCC1062).